Reading from the N-terminus, the 290-residue chain is Putative speedy protein-like protein 3 (290 aa).

Positions 16 to 50 are disordered; sequence GVDPSPPCRSLGWKRKKEWSDESEEEPEKELAPEP. Over residues 36–50 the composition is skewed to acidic residues; sequence DESEEEPEKELAPEP.

The protein belongs to the Speedy/Ringo family.

This Homo sapiens (Human) protein is Putative speedy protein-like protein 3.